The following is a 186-amino-acid chain: Casparian strip membrane protein 3 (186 aa).

Over 1 to 26 the chain is Cytoplasmic; that stretch reads MKAGALELGEGSKTSIPRGGVNRGIS. Residues 27 to 47 form a helical membrane-spanning segment; that stretch reads ILDFILRLITIIGTLGSAIAM. At 48–74 the chain is on the extracellular side; that stretch reads GTTNETLPFFTQFTQFRAEYDDLPTFT. Asn-51 is a glycosylation site (N-linked (GlcNAc...) asparagine). A helical transmembrane segment spans residues 75–95; the sequence is FFVIANSIVSGYLVLSLPMSI. Over 96 to 107 the chain is Cytoplasmic; it reads LHIVRSGARASR. A helical transmembrane segment spans residues 108-128; it reads IVLIFFDTAMLALLTAAASAA. Residues 129–161 lie on the Extracellular side of the membrane; the sequence is SAIVYLAHKGNAQANWFAICQQFKSFCERISGS. Residues 162–182 traverse the membrane as a helical segment; sequence LIGSFGGIILFILLVLLSAVA. Residues 183-186 are Cytoplasmic-facing; sequence LSRC.

It belongs to the Casparian strip membrane proteins (CASP) family. As to quaternary structure, homodimer and heterodimers.

The protein localises to the cell membrane. Its function is as follows. Regulates membrane-cell wall junctions and localized cell wall deposition. Required for establishment of the Casparian strip membrane domain (CSD) and the subsequent formation of Casparian strips, a cell wall modification of the root endodermis that determines an apoplastic barrier between the intraorganismal apoplasm and the extraorganismal apoplasm and prevents lateral diffusion. The protein is Casparian strip membrane protein 3 of Vitis vinifera (Grape).